A 38-amino-acid chain; its full sequence is Photosystem II reaction center protein L (38 aa).

A helical membrane pass occupies residues 17-37 (SLYWGLLLIFVLAVLFSSYIF).

The protein belongs to the PsbL family. In terms of assembly, PSII is composed of 1 copy each of membrane proteins PsbA, PsbB, PsbC, PsbD, PsbE, PsbF, PsbH, PsbI, PsbJ, PsbK, PsbL, PsbM, PsbT, PsbX, PsbY, PsbZ, Psb30/Ycf12, at least 3 peripheral proteins of the oxygen-evolving complex and a large number of cofactors. It forms dimeric complexes.

It localises to the plastid. The protein resides in the chloroplast thylakoid membrane. Functionally, one of the components of the core complex of photosystem II (PSII). PSII is a light-driven water:plastoquinone oxidoreductase that uses light energy to abstract electrons from H(2)O, generating O(2) and a proton gradient subsequently used for ATP formation. It consists of a core antenna complex that captures photons, and an electron transfer chain that converts photonic excitation into a charge separation. This subunit is found at the monomer-monomer interface and is required for correct PSII assembly and/or dimerization. The protein is Photosystem II reaction center protein L of Tetradesmus obliquus (Green alga).